We begin with the raw amino-acid sequence, 329 residues long: Quinone oxidoreductase (329 aa).

At A2 the chain carries N-acetylalanine. The residue at position 23 (K23) is an N6-acetyllysine. Residues Y53, 158–161, G181, H200, N229, 246–249, and 269–271 each bind NADP(+); these read SGGV, VGSR, and VTV. Position 248 is a phosphoserine (S248). Position 296 is an N6-succinyllysine (K296).

Belongs to the zinc-containing alcohol dehydrogenase family. Quinone oxidoreductase subfamily. Homotetramer.

It is found in the cytoplasm. The enzyme catalyses 2 a quinone + NADPH + H(+) = 2 a 1,4-benzosemiquinone + NADP(+). Its function is as follows. Does not have alcohol dehydrogenase activity. Binds NADP and acts through a one-electron transfer process. Orthoquinones, such as 1,2-naphthoquinone or 9,10-phenanthrenequinone, are the best substrates (in vitro). May act in the detoxification of xenobiotics. Interacts with (AU)-rich elements (ARE) in the 3'-UTR of target mRNA species and enhances their stability. NADPH binding interferes with mRNA binding. The chain is Quinone oxidoreductase (CRYZ) from Pongo abelii (Sumatran orangutan).